A 338-amino-acid chain; its full sequence is N-acetyl-gamma-glutamyl-phosphate reductase (338 aa).

C148 is an active-site residue.

It belongs to the NAGSA dehydrogenase family. Type 1 subfamily.

Its subcellular location is the cytoplasm. The catalysed reaction is N-acetyl-L-glutamate 5-semialdehyde + phosphate + NADP(+) = N-acetyl-L-glutamyl 5-phosphate + NADPH + H(+). It participates in amino-acid biosynthesis; L-arginine biosynthesis; N(2)-acetyl-L-ornithine from L-glutamate: step 3/4. Functionally, catalyzes the NADPH-dependent reduction of N-acetyl-5-glutamyl phosphate to yield N-acetyl-L-glutamate 5-semialdehyde. The polypeptide is N-acetyl-gamma-glutamyl-phosphate reductase (Leptospira borgpetersenii serovar Hardjo-bovis (strain JB197)).